The sequence spans 222 residues: Hexitol phosphatase B (222 aa).

Asp13 acts as the Nucleophile in catalysis. Residues Asp13 and Asp15 each contribute to the a divalent metal cation site. Substrate contacts are provided by residues 13-15, 115-116, and Lys148; these read DMD and SA. The Proton donor role is filled by Asp15. Asp173 is an a divalent metal cation binding site.

The protein belongs to the HAD-like hydrolase superfamily. CbbY/CbbZ/Gph/YieH family. It depends on Mg(2+) as a cofactor. Requires Mn(2+) as cofactor. Co(2+) serves as cofactor. Zn(2+) is required as a cofactor.

It catalyses the reaction sugar phosphate + H2O = sugar + phosphate.. It carries out the reaction 2-deoxy-D-glucose 6-phosphate + H2O = 2-deoxy-D-glucose + phosphate. The catalysed reaction is D-mannitol 1-phosphate + H2O = D-mannitol + phosphate. The enzyme catalyses D-sorbitol 6-phosphate + H2O = D-sorbitol + phosphate. Its function is as follows. Sugar-phosphate phosphohydrolase that catalyzes the dephosphorylation of D-mannitol 1-phosphate and D-sorbitol 6-phosphate. Also catalyzes the dephosphorylation of 2-deoxyglucose 6-phosphate (2dGlu6P); this is a biologically important activity in vivo since it contributes to the elimination of this toxic compound and plays an important role in the resistance of E.coli to 2-deoxyglucose. The sequence is that of Hexitol phosphatase B from Escherichia coli O157:H7.